The following is a 310-amino-acid chain: GMP synthase [glutamine-hydrolyzing] subunit B (310 aa).

The GMPS ATP-PPase domain maps to 1–187 (MSFSDYISRI…LGLPTDIQPF (187 aa)). Residue 27-33 (SGGQDSS) coordinates ATP.

As to quaternary structure, heterodimer composed of a glutamine amidotransferase subunit (A) and a GMP-binding subunit (B).

It carries out the reaction XMP + L-glutamine + ATP + H2O = GMP + L-glutamate + AMP + diphosphate + 2 H(+). It functions in the pathway purine metabolism; GMP biosynthesis; GMP from XMP (L-Gln route): step 1/1. Functionally, catalyzes the synthesis of GMP from XMP. The protein is GMP synthase [glutamine-hydrolyzing] subunit B (guaAB) of Thermoplasma volcanium (strain ATCC 51530 / DSM 4299 / JCM 9571 / NBRC 15438 / GSS1).